A 267-amino-acid polypeptide reads, in one-letter code: Putative hydro-lyase Arth_3576 (267 aa).

The protein belongs to the D-glutamate cyclase family.

This is Putative hydro-lyase Arth_3576 from Arthrobacter sp. (strain FB24).